Reading from the N-terminus, the 263-residue chain is Large ribosomal subunit protein uL23m (263 aa).

Residues 1-45 (MPRLTVGTKNMLYPLQKTLAVGSCKPEQVPIRSLASVVESSSKIL) constitute a mitochondrion transit peptide.

This sequence belongs to the universal ribosomal protein uL23 family. As to quaternary structure, component of the mitochondrial large ribosomal subunit (mt-LSU). Mature yeast 74S mitochondrial ribosomes consist of a small (37S) and a large (54S) subunit. The 37S small subunit contains a 15S ribosomal RNA (15S mt-rRNA) and 34 different proteins. The 54S large subunit contains a 21S rRNA (21S mt-rRNA) and 46 different proteins. uL23m forms the wall of the exit tunnel. Interacts with the C-terminus of OXA1.

It is found in the mitochondrion. Its function is as follows. Component of the mitochondrial ribosome (mitoribosome), a dedicated translation machinery responsible for the synthesis of mitochondrial genome-encoded proteins, including at least some of the essential transmembrane subunits of the mitochondrial respiratory chain. The mitoribosomes are attached to the mitochondrial inner membrane and translation products are cotranslationally integrated into the membrane. The protein is Large ribosomal subunit protein uL23m (MRP20) of Saccharomyces cerevisiae (strain ATCC 204508 / S288c) (Baker's yeast).